The primary structure comprises 254 residues: Imidazole glycerol phosphate synthase subunit HisF (254 aa).

Active-site residues include Asp11 and Asp130.

The protein belongs to the HisA/HisF family. As to quaternary structure, heterodimer of HisH and HisF.

The protein resides in the cytoplasm. It catalyses the reaction 5-[(5-phospho-1-deoxy-D-ribulos-1-ylimino)methylamino]-1-(5-phospho-beta-D-ribosyl)imidazole-4-carboxamide + L-glutamine = D-erythro-1-(imidazol-4-yl)glycerol 3-phosphate + 5-amino-1-(5-phospho-beta-D-ribosyl)imidazole-4-carboxamide + L-glutamate + H(+). Its pathway is amino-acid biosynthesis; L-histidine biosynthesis; L-histidine from 5-phospho-alpha-D-ribose 1-diphosphate: step 5/9. Its function is as follows. IGPS catalyzes the conversion of PRFAR and glutamine to IGP, AICAR and glutamate. The HisF subunit catalyzes the cyclization activity that produces IGP and AICAR from PRFAR using the ammonia provided by the HisH subunit. The protein is Imidazole glycerol phosphate synthase subunit HisF of Chromobacterium violaceum (strain ATCC 12472 / DSM 30191 / JCM 1249 / CCUG 213 / NBRC 12614 / NCIMB 9131 / NCTC 9757 / MK).